The sequence spans 671 residues: DNA ligase (671 aa).

NAD(+)-binding positions include 32-36, 81-82, and E113; these read DAEYD and SL. Residue K115 is the N6-AMP-lysine intermediate of the active site. The NAD(+) site is built by R136, E173, K290, and K314. 4 residues coordinate Zn(2+): C408, C411, C426, and C432. The 79-residue stretch at 593–671 folds into the BRCT domain; the sequence is EIDSPFAGKT…EAEMLRLFGE (79 aa).

It belongs to the NAD-dependent DNA ligase family. LigA subfamily. It depends on Mg(2+) as a cofactor. The cofactor is Mn(2+).

It catalyses the reaction NAD(+) + (deoxyribonucleotide)n-3'-hydroxyl + 5'-phospho-(deoxyribonucleotide)m = (deoxyribonucleotide)n+m + AMP + beta-nicotinamide D-nucleotide.. DNA ligase that catalyzes the formation of phosphodiester linkages between 5'-phosphoryl and 3'-hydroxyl groups in double-stranded DNA using NAD as a coenzyme and as the energy source for the reaction. It is essential for DNA replication and repair of damaged DNA. The polypeptide is DNA ligase (Enterobacter sp. (strain 638)).